A 469-amino-acid polypeptide reads, in one-letter code: 3-isopropylmalate dehydratase large subunit (469 aa).

The [4Fe-4S] cluster site is built by Cys347, Cys410, and Cys413.

The protein belongs to the aconitase/IPM isomerase family. LeuC type 1 subfamily. As to quaternary structure, heterodimer of LeuC and LeuD. [4Fe-4S] cluster is required as a cofactor.

The catalysed reaction is (2R,3S)-3-isopropylmalate = (2S)-2-isopropylmalate. The protein operates within amino-acid biosynthesis; L-leucine biosynthesis; L-leucine from 3-methyl-2-oxobutanoate: step 2/4. Its function is as follows. Catalyzes the isomerization between 2-isopropylmalate and 3-isopropylmalate, via the formation of 2-isopropylmaleate. The sequence is that of 3-isopropylmalate dehydratase large subunit from Burkholderia vietnamiensis (strain G4 / LMG 22486) (Burkholderia cepacia (strain R1808)).